We begin with the raw amino-acid sequence, 163 residues long: Ribonuclease H (163 aa).

The RNase H type-1 domain maps to 16–157 (TTSPVEIYCD…CDSLARQAIT (142 aa)). Residues aspartate 25, glutamate 63, aspartate 85, and aspartate 149 each contribute to the Mg(2+) site.

The protein belongs to the RNase H family. Monomer. Mg(2+) is required as a cofactor.

The protein resides in the cytoplasm. It catalyses the reaction Endonucleolytic cleavage to 5'-phosphomonoester.. Its function is as follows. Endonuclease that specifically degrades the RNA of RNA-DNA hybrids. The protein is Ribonuclease H of Pelobacter propionicus (strain DSM 2379 / NBRC 103807 / OttBd1).